The primary structure comprises 793 residues: Nuclear cap-binding protein subunit 1 (793 aa).

Positions 28–242 (EKKLQEVIGK…SLSAQIENLR (215 aa)) constitute an MIF4G domain.

This sequence belongs to the NCBP1 family. As to quaternary structure, component of the nuclear cap-binding complex (CBC), a heterodimer composed of ncbp-1 and ncbp-1 that interacts with m7GpppG-capped RNA.

It localises to the nucleus. Component of the cap-binding complex (CBC), which binds cotranscriptionally to the 5'-cap of pre-mRNAs and is involved in various processes such as pre-mRNA splicing and RNA-mediated gene silencing (RNAi). The CBC complex is involved in miRNA-mediated RNA interference and is required for primary microRNAs (miRNAs) processing. In the CBC complex, ncbp-1 does not bind directly capped RNAs (m7GpppG-capped RNA) but is required to stabilize the movement of the N-terminal loop of ncbp-2 and lock the CBC into a high affinity cap-binding state with the cap structure. The polypeptide is Nuclear cap-binding protein subunit 1 (ncbp-1) (Caenorhabditis briggsae).